The primary structure comprises 147 residues: 3-dehydroquinate dehydratase (147 aa).

Y23 functions as the Proton acceptor in the catalytic mechanism. The substrate site is built by N75, H81, and D88. H101 (proton donor) is an active-site residue. Substrate-binding positions include 102–103 (LS) and R112.

It belongs to the type-II 3-dehydroquinase family. As to quaternary structure, homododecamer.

The enzyme catalyses 3-dehydroquinate = 3-dehydroshikimate + H2O. The protein operates within metabolic intermediate biosynthesis; chorismate biosynthesis; chorismate from D-erythrose 4-phosphate and phosphoenolpyruvate: step 3/7. Catalyzes a trans-dehydration via an enolate intermediate. The polypeptide is 3-dehydroquinate dehydratase (Hahella chejuensis (strain KCTC 2396)).